A 202-amino-acid chain; its full sequence is ATP-dependent dethiobiotin synthetase BioD (202 aa).

Position 12 to 17 (12 to 17) interacts with ATP; sequence GIGKTI. Thr-16 lines the Mg(2+) pocket. Residue Lys-32 is part of the active site. Ser-36 serves as a coordination point for substrate. ATP contacts are provided by residues Asp-43, 94–97, and 178–180; these read EGAG and PVV. Residues Asp-43 and Glu-94 each coordinate Mg(2+).

It belongs to the dethiobiotin synthetase family. As to quaternary structure, homodimer. The cofactor is Mg(2+).

It is found in the cytoplasm. It catalyses the reaction (7R,8S)-7,8-diammoniononanoate + CO2 + ATP = (4R,5S)-dethiobiotin + ADP + phosphate + 3 H(+). Its pathway is cofactor biosynthesis; biotin biosynthesis; biotin from 7,8-diaminononanoate: step 1/2. Its function is as follows. Catalyzes a mechanistically unusual reaction, the ATP-dependent insertion of CO2 between the N7 and N8 nitrogen atoms of 7,8-diaminopelargonic acid (DAPA, also called 7,8-diammoniononanoate) to form a ureido ring. The sequence is that of ATP-dependent dethiobiotin synthetase BioD from Sphingopyxis alaskensis (strain DSM 13593 / LMG 18877 / RB2256) (Sphingomonas alaskensis).